The primary structure comprises 139 residues: ATP synthase epsilon chain 2 (139 aa).

It belongs to the ATPase epsilon chain family. In terms of assembly, F-type ATPases have 2 components, CF(1) - the catalytic core - and CF(0) - the membrane proton channel. CF(1) has five subunits: alpha(3), beta(3), gamma(1), delta(1), epsilon(1). CF(0) has three main subunits: a, b and c.

It localises to the cell inner membrane. Functionally, produces ATP from ADP in the presence of a proton gradient across the membrane. The sequence is that of ATP synthase epsilon chain 2 (atpC2) from Ralstonia nicotianae (strain ATCC BAA-1114 / GMI1000) (Ralstonia solanacearum).